The primary structure comprises 133 residues: Glutaredoxin-C4, chloroplastic (133 aa).

Residues 1–13 (MGMAQSSSSSSRP) are compositionally biased toward low complexity. Positions 1–25 (MGMAQSSSSSSRPSDSEQLEEPSKP) are disordered. The N-terminal 27 residues, 1–27 (MGMAQSSSSSSRPSDSEQLEEPSKPVM), are a transit peptide targeting the chloroplast. The Glutaredoxin domain maps to 29 to 129 (LDKAKEIVAS…PLLTEAGAIA (101 aa)). A disulfide bridge connects residues cysteine 49 and cysteine 52.

This sequence belongs to the glutaredoxin family. CPYC subfamily.

The protein resides in the plastid. It localises to the chloroplast. Has a glutathione-disulfide oxidoreductase activity in the presence of NADPH and glutathione reductase. Reduces low molecular weight disulfides and proteins. This is Glutaredoxin-C4, chloroplastic (GRXC4) from Oryza sativa subsp. japonica (Rice).